Consider the following 519-residue polypeptide: Na(+)/H(+) exchange regulatory cofactor NHE-RF3 (519 aa).

A PDZ 1 domain is found at 9–90; sequence ECKLSKQEGQ…SVTLLVLDGD (82 aa). Phosphoserine is present on residues S108, S148, S192, S250, S334, and S348. 2 consecutive PDZ domains span residues 134-215 and 243-323; these read RLCY…VDKE and IVEM…VDKE. The segment at 347–374 is disordered; that stretch reads GSVKEAPAPTPTSLEVSSPPDTTEEVDH. Residues 357–367 show a composition bias toward polar residues; sequence PTSLEVSSPPD. A PDZ 4 domain is found at 378 to 458; the sequence is LCRLAKGENG…NVTLLVCGKK (81 aa). T451 is subject to Phosphothreonine. Residues 479–519 form a disordered region; it reads DTPPDSKEGIVVESNHDSHMAKERAHSTASHSSSNSEDTEM. Residues 482-504 show a composition bias toward basic and acidic residues; that stretch reads PDSKEGIVVESNHDSHMAKERAH. Phosphoserine is present on residues S492, S508, S510, S511, S512, and S514. Over residues 505–519 the composition is skewed to low complexity; sequence STASHSSSNSEDTEM.

This sequence belongs to the NHER family. In terms of assembly, interacts with PDZK1IP1 and ABCC2. Interacts (via PDZ domains 1 and 3) with SCARB1 (C-terminal domain). Forms a heterodimeric complex with NHERF1. Interacts with AKAP2, BCR, CFTR, SLC22A12, SLC22A4, SLC22A5, NHERF2 and SLC17A1. Component of a complex, composed of PDZK1, SYNGAP1, KLHL17 and NMDA receptors. Interacts (via PDZ1 domain) directly with KLHL17; the interaction is important for integrity of actin cytoskeleton structures in neurons. Interacts (via the first PDZ domain) with PTGIR (via non-isoprenylated C-terminus). Interacts (via C-terminal PDZ domain) with SLC26A6 (via C-terminal domain). Interacts (via C-terminal PDZ domain) with SLC9A3 (via C-terminal domain). Interacts (via PDZ domains 1 and 3) with SLC5A8 (via PDZ-binding motif); interaction increases nicotinate transport activity of SLC5A8. As to expression, expression is limited to epithelial cells. Expressed in the kidney (brush border of proximal tubule), pancreas, liver, and small intestine. Expressed at a lower level in the adrenal cortex, testis and stomach. Overexpressed in breast, renal and lung carcinomas.

It localises to the membrane. Its subcellular location is the cell membrane. Its function is as follows. A scaffold protein that connects plasma membrane proteins and regulatory components, regulating their surface expression in epithelial cells apical domains. May be involved in the coordination of a diverse range of regulatory processes for ion transport and second messenger cascades. In complex with NHERF1, may cluster proteins that are functionally dependent in a mutual fashion and modulate the trafficking and the activity of the associated membrane proteins. May play a role in the cellular mechanisms associated with multidrug resistance through its interaction with ABCC2 and PDZK1IP1. May potentiate the CFTR chloride channel activity. Required for normal cell-surface expression of SCARB1. Plays a role in maintaining normal plasma cholesterol levels via its effects on SCARB1. Plays a role in the normal localization and function of the chloride-anion exchanger SLC26A6 to the plasma membrane in the brush border of the proximal tubule of the kidney. May be involved in the regulation of proximal tubular Na(+)-dependent inorganic phosphate cotransport therefore playing an important role in tubule function. The polypeptide is Na(+)/H(+) exchange regulatory cofactor NHE-RF3 (PDZK1) (Homo sapiens (Human)).